A 130-amino-acid chain; its full sequence is Holo-[acyl-carrier-protein] synthase (130 aa).

Residues D8 and E62 each contribute to the Mg(2+) site.

This sequence belongs to the P-Pant transferase superfamily. AcpS family. Requires Mg(2+) as cofactor.

Its subcellular location is the cytoplasm. It carries out the reaction apo-[ACP] + CoA = holo-[ACP] + adenosine 3',5'-bisphosphate + H(+). In terms of biological role, transfers the 4'-phosphopantetheine moiety from coenzyme A to a Ser of acyl-carrier-protein. The polypeptide is Holo-[acyl-carrier-protein] synthase (Herminiimonas arsenicoxydans).